A 124-amino-acid chain; its full sequence is Small ribosomal subunit protein uS12 (124 aa).

Position 90 is a 3-methylthioaspartic acid (D90).

This sequence belongs to the universal ribosomal protein uS12 family. As to quaternary structure, part of the 30S ribosomal subunit. Contacts proteins S8 and S17. May interact with IF1 in the 30S initiation complex.

With S4 and S5 plays an important role in translational accuracy. In terms of biological role, interacts with and stabilizes bases of the 16S rRNA that are involved in tRNA selection in the A site and with the mRNA backbone. Located at the interface of the 30S and 50S subunits, it traverses the body of the 30S subunit contacting proteins on the other side and probably holding the rRNA structure together. The combined cluster of proteins S8, S12 and S17 appears to hold together the shoulder and platform of the 30S subunit. This is Small ribosomal subunit protein uS12 from Wolbachia sp. subsp. Brugia malayi (strain TRS).